We begin with the raw amino-acid sequence, 125 residues long: SOSS complex subunit C homolog A (125 aa).

A compositionally biased stretch (polar residues) spans 1–16 (MAFPNTSAQQAETNSK). Disordered stretches follow at residues 1-20 (MAFP…SLEE), 38-74 (SNTN…AAFN), and 105-125 (PATP…NNPK).

This sequence belongs to the SOSS-C family.

The polypeptide is SOSS complex subunit C homolog A (Drosophila willistoni (Fruit fly)).